The primary structure comprises 476 residues: 3-isopropylmalate dehydratase large subunit (476 aa).

[4Fe-4S] cluster-binding residues include Cys353, Cys413, and Cys416.

It belongs to the aconitase/IPM isomerase family. LeuC type 1 subfamily. Heterodimer of LeuC and LeuD. [4Fe-4S] cluster serves as cofactor.

It catalyses the reaction (2R,3S)-3-isopropylmalate = (2S)-2-isopropylmalate. It functions in the pathway amino-acid biosynthesis; L-leucine biosynthesis; L-leucine from 3-methyl-2-oxobutanoate: step 2/4. Catalyzes the isomerization between 2-isopropylmalate and 3-isopropylmalate, via the formation of 2-isopropylmaleate. In Yersinia enterocolitica serotype O:8 / biotype 1B (strain NCTC 13174 / 8081), this protein is 3-isopropylmalate dehydratase large subunit.